A 236-amino-acid chain; its full sequence is Small ribosomal subunit protein uS2c (236 aa).

Belongs to the universal ribosomal protein uS2 family.

Its subcellular location is the plastid. It is found in the chloroplast. The chain is Small ribosomal subunit protein uS2c (rps2) from Buxus microphylla (Littleleaf boxwood).